Consider the following 1360-residue polypeptide: Transmembrane protein 94 (1360 aa).

Over 1–64 the chain is Cytoplasmic; sequence MDLREKHLGE…FLHLSNRCSC (64 aa). The chain crosses the membrane as a helical span at residues 65-85; the sequence is FHWPGASLMLLAVLLLLCCCG. The Lumenal segment spans residues 86-92; the sequence is GQPAGSQ. The helical transmembrane segment at 93–113 threads the bilayer; the sequence is GVELVNASALFLLLLLNLVLI. Topologically, residues 114–273 are cytoplasmic; sequence GRQDRLKRRE…RPVTALDNER (160 aa). Phosphoserine occurs at positions 221 and 225. Residues 274–294 form a helical membrane-spanning segment; that stretch reads FTVQSVMLHYAVPVVLAGFLI. Residues 295–320 are Lumenal-facing; that stretch reads TNALRFMFKAPGVTSWQYTLLQLQVN. The chain crosses the membrane as a helical span at residues 321–341; it reads GMLPILPLLFPVLWVLATACG. Residues 342 to 1096 are Cytoplasmic-facing; that stretch reads EARVLAQMSK…RHATYGIRKC (755 aa). A DKQGIL motif is present at residues 417 to 422; the sequence is DKQGIL. Phosphoserine is present on residues serine 444, serine 445, and serine 454. Residues 487–545 are disordered; that stretch reads EQERSDWLADGPKPSEPYPHHKGHGRSKHPSGSNVSFSRDTEGGEEEPSKAQPGTEGDP. The segment covering 506–515 has biased composition (basic residues); that stretch reads HHKGHGRSKH. Residues serine 517, serine 522, serine 802, and serine 945 each carry the phosphoserine modification. The chain crosses the membrane as a helical span at residues 1097–1117; sequence FLFLLQCQLTLVVIQFLSCLV. Topologically, residues 1118-1124 are lumenal; the sequence is QLPPLLS. A helical membrane pass occupies residues 1125 to 1145; that stretch reads TTDILWLSCFCYPLLSISLLG. At 1146 to 1171 the chain is on the cytoplasmic side; sequence KPPHSSIMSMATGKNLQSIPKKTQHY. A helical membrane pass occupies residues 1172-1192; sequence FLLCFLLKFSLTISSCLVCFG. The Lumenal portion of the chain corresponds to 1193-1232; that stretch reads FTLQSFCDSARARNLTNCSSVMLCSNDDRAPAWFEDFANG. 2 N-linked (GlcNAc...) asparagine glycosylation sites follow: asparagine 1206 and asparagine 1209. Residues 1233 to 1253 form a helical membrane-spanning segment; that stretch reads LLSAQKLTAALIVLHTVFISI. The Cytoplasmic portion of the chain corresponds to 1254–1269; sequence THVHRTKPLWRKSPLT. The helical transmembrane segment at 1270-1290 threads the bilayer; the sequence is NLWWAVTVPVVLLGQVVQTVV. The Lumenal segment spans residues 1291-1310; that stretch reads DLQLWTHRDSRVHFGLEDVP. Residues 1311-1331 traverse the membrane as a helical segment; the sequence is LLTWLLGCLSLVLVVVTNEIV. At 1332 to 1360 the chain is on the cytoplasmic side; it reads KLHEIRVRVRYQKRQKLQFETKLGMNSPF. The GMN; metal-binding motif signature appears at 1355-1357; the sequence is GMN.

Forms homooligomers.

The protein resides in the endoplasmic reticulum membrane. Functionally, could function in the uptake of Mg(2+) from the cytosol into the endoplasmic reticulum and regulate intracellular Mg(2+) homeostasis. In Mus musculus (Mouse), this protein is Transmembrane protein 94.